A 216-amino-acid chain; its full sequence is Glycerol-3-phosphate acyltransferase (216 aa).

5 helical membrane passes run 5 to 25, 70 to 90, 118 to 138, 140 to 160, and 164 to 184; these read LIALAAAAGGYLFGSIPFGLV, IAAAVFGYFLGTTAGLVAGAF, VVFWPVGLTVIATWLAMAAIF, ISSLAALAAALAAPFAALAWG, and VAIMAGLLTVLIYWLHRANIS. A compositionally biased stretch (basic and acidic residues) spans 192–201; sequence PRIGGKKSET. Residues 192–216 are disordered; it reads PRIGGKKSETSADVSDGDDPDTPAT. Residues 206-216 show a composition bias toward acidic residues; sequence SDGDDPDTPAT.

Belongs to the PlsY family. Probably interacts with PlsX.

The protein localises to the cell inner membrane. The enzyme catalyses an acyl phosphate + sn-glycerol 3-phosphate = a 1-acyl-sn-glycero-3-phosphate + phosphate. Its pathway is lipid metabolism; phospholipid metabolism. Its function is as follows. Catalyzes the transfer of an acyl group from acyl-phosphate (acyl-PO(4)) to glycerol-3-phosphate (G3P) to form lysophosphatidic acid (LPA). This enzyme utilizes acyl-phosphate as fatty acyl donor, but not acyl-CoA or acyl-ACP. The protein is Glycerol-3-phosphate acyltransferase of Maricaulis maris (strain MCS10) (Caulobacter maris).